A 181-amino-acid polypeptide reads, in one-letter code: MENTQENPATPSAEDIGSEKQAAQGAAPAAEAADAALAEAQAKVAELQESFLRAKAETENVRRRAQDDVSKAHKFAIESFAEHLLPVLDSLEAAVSDTSGDIAKVREGVELTLRQLTSALEKGRVVAINPVGEKFDPHQHQAISMVPAEQEPNTVVTVLQKGYMIADRVLRPALVTVAQSK.

Residues 1–10 show a composition bias toward polar residues; it reads MENTQENPAT. A disordered region spans residues 1-33; that stretch reads MENTQENPATPSAEDIGSEKQAAQGAAPAAEAA. Residues 21–33 are compositionally biased toward low complexity; sequence QAAQGAAPAAEAA.

The protein belongs to the GrpE family. Homodimer.

It localises to the cytoplasm. Participates actively in the response to hyperosmotic and heat shock by preventing the aggregation of stress-denatured proteins, in association with DnaK and GrpE. It is the nucleotide exchange factor for DnaK and may function as a thermosensor. Unfolded proteins bind initially to DnaJ; upon interaction with the DnaJ-bound protein, DnaK hydrolyzes its bound ATP, resulting in the formation of a stable complex. GrpE releases ADP from DnaK; ATP binding to DnaK triggers the release of the substrate protein, thus completing the reaction cycle. Several rounds of ATP-dependent interactions between DnaJ, DnaK and GrpE are required for fully efficient folding. The sequence is that of Protein GrpE from Burkholderia cenocepacia (strain ATCC BAA-245 / DSM 16553 / LMG 16656 / NCTC 13227 / J2315 / CF5610) (Burkholderia cepacia (strain J2315)).